Reading from the N-terminus, the 645-residue chain is 1,4-alpha-glucan branching enzyme GlgB (645 aa).

Asp309 serves as the catalytic Nucleophile. Catalysis depends on Glu352, which acts as the Proton donor. The segment at 619-645 (VKTRKGSKKQDGSKTKVRSNVTSRGKR) is disordered. Residues 636–645 (RSNVTSRGKR) are compositionally biased toward polar residues.

This sequence belongs to the glycosyl hydrolase 13 family. GlgB subfamily. As to quaternary structure, monomer.

It catalyses the reaction Transfers a segment of a (1-&gt;4)-alpha-D-glucan chain to a primary hydroxy group in a similar glucan chain.. The protein operates within glycan biosynthesis; glycogen biosynthesis. In terms of biological role, catalyzes the formation of the alpha-1,6-glucosidic linkages in glycogen by scission of a 1,4-alpha-linked oligosaccharide from growing alpha-1,4-glucan chains and the subsequent attachment of the oligosaccharide to the alpha-1,6 position. In Bacillus cereus (strain AH187), this protein is 1,4-alpha-glucan branching enzyme GlgB.